The sequence spans 191 residues: Peptidyl-tRNA hydrolase (191 aa).

A tRNA-binding site is contributed by Tyr14. The active-site Proton acceptor is the His19. TRNA-binding residues include Tyr64, Asn66, and Asn112.

It belongs to the PTH family. In terms of assembly, monomer.

The protein resides in the cytoplasm. The catalysed reaction is an N-acyl-L-alpha-aminoacyl-tRNA + H2O = an N-acyl-L-amino acid + a tRNA + H(+). Functionally, hydrolyzes ribosome-free peptidyl-tRNAs (with 1 or more amino acids incorporated), which drop off the ribosome during protein synthesis, or as a result of ribosome stalling. Its function is as follows. Catalyzes the release of premature peptidyl moieties from peptidyl-tRNA molecules trapped in stalled 50S ribosomal subunits, and thus maintains levels of free tRNAs and 50S ribosomes. The sequence is that of Peptidyl-tRNA hydrolase from Syntrophotalea carbinolica (strain DSM 2380 / NBRC 103641 / GraBd1) (Pelobacter carbinolicus).